The chain runs to 155 residues: Large-conductance mechanosensitive channel (155 aa).

2 consecutive transmembrane segments (helical) span residues 25 to 45 (VLDL…VTSL) and 98 to 118 (GDFI…FLIV).

Belongs to the MscL family. In terms of assembly, homopentamer.

It localises to the cell inner membrane. In terms of biological role, channel that opens in response to stretch forces in the membrane lipid bilayer. May participate in the regulation of osmotic pressure changes within the cell. This chain is Large-conductance mechanosensitive channel, found in Novosphingobium aromaticivorans (strain ATCC 700278 / DSM 12444 / CCUG 56034 / CIP 105152 / NBRC 16084 / F199).